Reading from the N-terminus, the 428-residue chain is Enolase (428 aa).

Q165 serves as a coordination point for (2R)-2-phosphoglycerate. E207 serves as the catalytic Proton donor. Mg(2+) contacts are provided by D244, E285, and D312. Residues K337, R366, S367, and K388 each coordinate (2R)-2-phosphoglycerate. K337 functions as the Proton acceptor in the catalytic mechanism.

The protein belongs to the enolase family. As to quaternary structure, component of the RNA degradosome, a multiprotein complex involved in RNA processing and mRNA degradation. Mg(2+) is required as a cofactor.

It localises to the cytoplasm. Its subcellular location is the secreted. It is found in the cell surface. The enzyme catalyses (2R)-2-phosphoglycerate = phosphoenolpyruvate + H2O. It functions in the pathway carbohydrate degradation; glycolysis; pyruvate from D-glyceraldehyde 3-phosphate: step 4/5. In terms of biological role, catalyzes the reversible conversion of 2-phosphoglycerate (2-PG) into phosphoenolpyruvate (PEP). It is essential for the degradation of carbohydrates via glycolysis. This is Enolase from Coxiella burnetii (strain CbuK_Q154) (Coxiella burnetii (strain Q154)).